The chain runs to 121 residues: MRLPAQLLGLLMLWVPGSSEDIVMTQTPLSLPVTPGEPASISCRSSQSLLDSDDGNTYLDWYLQKPGQSPQLLIYTLSYRASGVPDRFSGSGSGTDFTLKISRVEAEDVGVYYCMQRIEFP.

The signal sequence occupies residues 1 to 19 (MRLPAQLLGLLMLWVPGSS). Residues 20 to 121 (EDIVMTQTPL…YYCMQRIEFP (102 aa)) enclose the Ig-like domain. The segment at 21–43 (DIVMTQTPLSLPVTPGEPASISC) is framework-1. Cys-43 and Cys-114 form a disulfide bridge. The tract at residues 44 to 60 (RSSQSLLDSDDGNTYLD) is complementarity-determining-1. Residues 61-75 (WYLQKPGQSPQLLIY) are framework-2. Positions 76-82 (TLSYRAS) are complementarity-determining-2. The framework-3 stretch occupies residues 83–114 (GVPDRFSGSGSGTDFTLKISRVEAEDVGVYYC). The interval 115 to 121 (MQRIEFP) is complementarity-determining-3.

As to quaternary structure, immunoglobulins are composed of two identical heavy chains and two identical light chains; disulfide-linked.

The protein resides in the secreted. The protein localises to the cell membrane. Functionally, v region of the variable domain of immunoglobulin light chains that participates in the antigen recognition. Immunoglobulins, also known as antibodies, are membrane-bound or secreted glycoproteins produced by B lymphocytes. In the recognition phase of humoral immunity, the membrane-bound immunoglobulins serve as receptors which, upon binding of a specific antigen, trigger the clonal expansion and differentiation of B lymphocytes into immunoglobulins-secreting plasma cells. Secreted immunoglobulins mediate the effector phase of humoral immunity, which results in the elimination of bound antigens. The antigen binding site is formed by the variable domain of one heavy chain, together with that of its associated light chain. Thus, each immunoglobulin has two antigen binding sites with remarkable affinity for a particular antigen. The variable domains are assembled by a process called V-(D)-J rearrangement and can then be subjected to somatic hypermutations which, after exposure to antigen and selection, allow affinity maturation for a particular antigen. This chain is Immunoglobulin kappa variable 2-40, found in Homo sapiens (Human).